The sequence spans 676 residues: Rho guanine nucleotide exchange factor 37 (676 aa).

Residues 1-26 (MADFETDEASSKSESPEQEGQGSEDK) form a disordered region. A DH domain is found at 30 to 213 (HQRLAIRELI…QDVNSNINEY (184 aa)). Residues 254-455 (LKQEAGLVPR…LPHRHVSEPD (202 aa)) form the BAR domain. 2 consecutive SH3 domains span residues 506-569 (GPGK…LYHP) and 603-666 (PTMS…RTPS). Disordered regions lie at residues 568-601 (HPIN…SVPT) and 657-676 (PSNF…NLPS).

May act as a guanine nucleotide exchange factor (GEF). This chain is Rho guanine nucleotide exchange factor 37 (Arhgef37), found in Rattus norvegicus (Rat).